The following is a 529-amino-acid chain: [Pyruvate dehydrogenase [acetyl-transferring]]-phosphatase 2, mitochondrial (529 aa).

The N-terminal 66 residues, 1-66 (MSSTVSYWIL…FTLCKAYRHT (66 aa)), are a transit peptide targeting the mitochondrion. Residues 106-517 (VLRFESNQLA…DDITVTVVYF (412 aa)) enclose the PPM-type phosphatase domain. Mn(2+) is bound by residues aspartate 141, glycine 142, aspartate 412, and aspartate 508.

The protein belongs to the PP2C family. The cofactor is Mg(2+).

The protein resides in the mitochondrion. It catalyses the reaction O-phospho-L-seryl-[pyruvate dehydrogenase E1 alpha subunit] + H2O = L-seryl-[pyruvate dehydrogenase E1 alpha subunit] + phosphate. Its function is as follows. Mitochondrial enzyme that catalyzes the dephosphorylation and concomitant reactivation of the alpha subunit of the E1 component of the pyruvate dehydrogenase complex (PDC), thereby stimulating the conversion of pyruvate into acetyl-CoA. Acts as a crucial regulator of T cell metabolism and function, with a particular focus on T-helper Th17. This is [Pyruvate dehydrogenase [acetyl-transferring]]-phosphatase 2, mitochondrial from Homo sapiens (Human).